The chain runs to 350 residues: Putative ankyrin repeat protein RBE_0589 (350 aa).

3 ANK repeats span residues 81–110, 114–151, and 153–182; these read DGFT…NPNI, DIVT…EPTD, and SGWT…NLDI.

This Rickettsia bellii (strain RML369-C) protein is Putative ankyrin repeat protein RBE_0589.